A 157-amino-acid chain; its full sequence is Transcription factor HES-2 (157 aa).

A bHLH domain is found at 13-70 (LRKSLKPLLEKRRRARINESLSQLKGLVLPLLGAETSRYSKLEKADILEMTVRFLREQ). The region spanning 86–119 (YLEGYRACLARLARVLPACSVLEPAVSARLLEHL) is the Orange domain. A disordered region spans residues 124–157 (VSGGPPSLTPASASAPAPSPPVPPPSSLGLWRPW). Over residues 125–139 (SGGPPSLTPASASAP) the composition is skewed to low complexity. A compositionally biased stretch (pro residues) spans 140 to 149 (APSPPVPPPS). The WRPW motif motif lies at 154 to 157 (WRPW).

Transcription repression requires formation of a complex with a corepressor protein of the Groucho/TLE family.

The protein localises to the nucleus. In terms of biological role, transcriptional repressor of genes that require a bHLH protein for their transcription. In Rattus norvegicus (Rat), this protein is Transcription factor HES-2 (Hes2).